The chain runs to 508 residues: POTE ankyrin domain family member G (508 aa).

ANK repeat units follow at residues 172–201 (QKRT…QLNI), 205–234 (KKRT…DPNI), 238–267 (YGNT…DIES), 271–300 (HGLT…NLNA), and 304–333 (YGRT…DVSS). The segment covering 367–376 (KVSSENSNPE) has biased composition (polar residues). The segment at 367–488 (KVSSENSNPE…QLSEEQNTGI (122 aa)) is disordered. Basic and acidic residues-rich tracts occupy residues 377-392 (QDLK…RLKG) and 406-421 (EINK…EMKK). Residues 476–488 (TQKQLSEEQNTGI) are compositionally biased toward polar residues.

The protein belongs to the POTE family.

This is POTE ankyrin domain family member G (POTEG) from Homo sapiens (Human).